The following is a 55-amino-acid chain: Riparin-1.4 (55 aa).

The first 15 residues, 1-15 (MKIIVVLAVLMLVSA), serve as a signal peptide directing secretion. Residues 16–41 (QVCLVSAAEMGHSSDNELSSRDLVKR) constitute a propeptide that is removed on maturation. An intrachain disulfide couples cysteine 47 to cysteine 53. Positions 54-55 (NH) are excised as a propeptide.

In terms of tissue distribution, expressed by the skin glands.

Its subcellular location is the secreted. In Crinia riparia (Streambank froglet), this protein is Riparin-1.4.